A 313-amino-acid chain; its full sequence is Ribosomal RNA small subunit methyltransferase H (313 aa).

Residues 35–37 (GGH), Asp-55, Phe-79, Asp-101, and Gln-108 contribute to the S-adenosyl-L-methionine site.

It belongs to the methyltransferase superfamily. RsmH family.

The protein resides in the cytoplasm. The enzyme catalyses cytidine(1402) in 16S rRNA + S-adenosyl-L-methionine = N(4)-methylcytidine(1402) in 16S rRNA + S-adenosyl-L-homocysteine + H(+). Functionally, specifically methylates the N4 position of cytidine in position 1402 (C1402) of 16S rRNA. This Enterobacter sp. (strain 638) protein is Ribosomal RNA small subunit methyltransferase H.